Here is a 330-residue protein sequence, read N- to C-terminus: T-cell leukemia homeobox protein 1 (330 aa).

The interval 186–207 is disordered; sequence DRFTGHPYQNRTPPKKKKPRTS. Residues 201–260 constitute a DNA-binding region (homeobox); it reads KKKPRTSFTRLQICELEKRFHRQKYLASAERAALAKALKMTDAQVKTWFQNRRTKWRRQT. Lys236 bears the N6-acetyllysine mark.

As to quaternary structure, interacts with MEIS1, MEIS2, PBX1, PBX2 and PBX3.

The protein resides in the nucleus. In terms of biological role, controls the genesis of the spleen. Binds to the DNA sequence 5'-GGCGGTAAGTGG-3'. The chain is T-cell leukemia homeobox protein 1 (TLX1) from Homo sapiens (Human).